The sequence spans 151 residues: Metalloproteinase inhibitor 3 (151 aa).

In terms of domain architecture, NTR spans 1–108; the sequence is CNSDIVIRAK…GLNYRYHLGC (108 aa). Cystine bridges form between C1/C108, C115/C120, and C128/C149. The tract at residues 53–54 is involved in metalloproteinase-binding; that stretch reads ES. The interval 71–151 is mediates interaction with EFEMP1; the sequence is GRVYDGKVYT…YQSKHYACIR (81 aa).

It belongs to the protease inhibitor I35 (TIMP) family. As to quaternary structure, interacts with EFEMP1.

Its subcellular location is the secreted. The protein localises to the extracellular space. It localises to the extracellular matrix. Functionally, complexes with metalloproteinases (such as collagenases) and irreversibly inactivates them by binding to their catalytic zinc cofactor. May form part of a tissue-specific acute response to remodeling stimuli. In Oryctolagus cuniculus (Rabbit), this protein is Metalloproteinase inhibitor 3 (TIMP3).